The primary structure comprises 145 residues: Peptide methionine sulfoxide reductase MsrB (145 aa).

A MsrB domain is found at 6 to 129 (EEELKQTLTD…NAAALRFVPV (124 aa)). The Nucleophile role is filled by C118.

It belongs to the MsrB Met sulfoxide reductase family.

The enzyme catalyses L-methionyl-[protein] + [thioredoxin]-disulfide + H2O = L-methionyl-(R)-S-oxide-[protein] + [thioredoxin]-dithiol. This chain is Peptide methionine sulfoxide reductase MsrB, found in Enterococcus faecalis (strain ATCC 700802 / V583).